The sequence spans 28 residues: Truncated protein OPG079 (28 aa).

The protein belongs to the orthopoxvirus OPG079 family. In terms of assembly, homoomultimer (Potential). Interacts with the small subunit of ribonucleotide reductase. Interacts with host FAM111A; this interaction protomtes OPG079 degradation through autophagy.

The protein resides in the host cytoplasm. In terms of biological role, plays an essential role in viral DNA replication. Binds to ssDNA with high affinity and localizes to cytoplasmic factories where nascent viral genomes accumulate. May disrupt loops, hairpins and other secondary structures present on ssDNA to reduce and eliminate pausing of viral DNA polymerase at specific sites during elongation. This chain is Truncated protein OPG079 (OPG079), found in Vaccinia virus (strain L-IVP) (VACV).